A 315-amino-acid chain; its full sequence is MTIDSGFNHITVLLDEAVEALAVRPDGCYLDGTFGRGGHSRLILSKLGPQGRLLGFDKDPQAIATGQALAAEDGRFVVVQRSFAELGSEVAERGLAGKVSGVLLDLGVSSPQLDDPERGFSFLNDGPLDMRMDPTRGISAAQFIATAPVEEIARVFKEYGEERFSGRMARAVVERREIQPFERTADLAEVLKVANPAWEKGKNPATRAFQGLRIHVNNELGDLEAGLEAALESLEVGGRLVVISFHSLEDRIVKLFMRRLVKGESDNLPRNLPVRFEAFVPKIKIHGKAQFASEAELKANPRARSAVMRVAEKLR.

S-adenosyl-L-methionine is bound by residues 37-39 (GGH), Asp57, Phe83, Asp105, and Gln112.

This sequence belongs to the methyltransferase superfamily. RsmH family.

It localises to the cytoplasm. The catalysed reaction is cytidine(1402) in 16S rRNA + S-adenosyl-L-methionine = N(4)-methylcytidine(1402) in 16S rRNA + S-adenosyl-L-homocysteine + H(+). Its function is as follows. Specifically methylates the N4 position of cytidine in position 1402 (C1402) of 16S rRNA. The chain is Ribosomal RNA small subunit methyltransferase H from Pseudomonas fluorescens (strain ATCC BAA-477 / NRRL B-23932 / Pf-5).